Consider the following 372-residue polypeptide: Bifunctional coenzyme PQQ synthesis protein C/D (372 aa).

The segment at 1 to 267 (MTAQFPPPVP…VAETNSAEDS (267 aa)) is pqqC. The interval 260-288 (ETNSAEDSPAAAASPAATTAEPTAFSGSD) is disordered. Low complexity predominate over residues 264–283 (AEDSPAAAASPAATTAEPTA). The interval 268–280 (PAAAASPAATTAE) is linker. Positions 281–372 (PTAFSGSDVP…GLAQKRVLER (92 aa)) are pqqD.

It in the N-terminal section; belongs to the PqqC family. This sequence in the C-terminal section; belongs to the PqqD family. As to quaternary structure, monomer. Interacts with PqqE.

The enzyme catalyses 6-(2-amino-2-carboxyethyl)-7,8-dioxo-1,2,3,4,7,8-hexahydroquinoline-2,4-dicarboxylate + 3 O2 = pyrroloquinoline quinone + 2 H2O2 + 2 H2O + H(+). Its pathway is cofactor biosynthesis; pyrroloquinoline quinone biosynthesis. The PqqC region is involved in ring cyclization and eight-electron oxidation of 3a-(2-amino-2-carboxyethyl)-4,5-dioxo-4,5,6,7,8,9-hexahydroquinoline-7,9-dicarboxylic-acid to PQQ. Its function is as follows. The PqqD region functions as a PqqA binding domain and presents PqqA to PqqE. This is Bifunctional coenzyme PQQ synthesis protein C/D (pqqCD) from Methylorubrum extorquens (strain ATCC 14718 / DSM 1338 / JCM 2805 / NCIMB 9133 / AM1) (Methylobacterium extorquens).